A 511-amino-acid chain; its full sequence is UDP-N-acetylmuramoyl-L-alanyl-D-glutamate--2,6-diaminopimelate ligase (511 aa).

Serine 30 lines the UDP-N-acetyl-alpha-D-muramoyl-L-alanyl-D-glutamate pocket. Residue 110-116 (GTNGKTT) participates in ATP binding. UDP-N-acetyl-alpha-D-muramoyl-L-alanyl-D-glutamate is bound by residues 152-153 (TT), serine 179, glutamine 185, and arginine 187. At lysine 219 the chain carries N6-carboxylysine. Residues arginine 385, 409–412 (DNPR), glycine 476, and glutamate 480 contribute to the meso-2,6-diaminopimelate site. The short motif at 409–412 (DNPR) is the Meso-diaminopimelate recognition motif element.

Belongs to the MurCDEF family. MurE subfamily. Requires Mg(2+) as cofactor. In terms of processing, carboxylation is probably crucial for Mg(2+) binding and, consequently, for the gamma-phosphate positioning of ATP.

It is found in the cytoplasm. The enzyme catalyses UDP-N-acetyl-alpha-D-muramoyl-L-alanyl-D-glutamate + meso-2,6-diaminopimelate + ATP = UDP-N-acetyl-alpha-D-muramoyl-L-alanyl-gamma-D-glutamyl-meso-2,6-diaminopimelate + ADP + phosphate + H(+). It functions in the pathway cell wall biogenesis; peptidoglycan biosynthesis. Its function is as follows. Catalyzes the addition of meso-diaminopimelic acid to the nucleotide precursor UDP-N-acetylmuramoyl-L-alanyl-D-glutamate (UMAG) in the biosynthesis of bacterial cell-wall peptidoglycan. This Geobacter metallireducens (strain ATCC 53774 / DSM 7210 / GS-15) protein is UDP-N-acetylmuramoyl-L-alanyl-D-glutamate--2,6-diaminopimelate ligase.